The sequence spans 96 residues: GTPase HRas (96 aa).

The residue at position 1 (Met-1) is an N-acetylmethionine. N-acetylthreonine; in GTPase HRas, N-terminally processed is present on Thr-2. Residue 10–17 participates in GTP binding; that stretch reads GAGGVGKS. The Effector region motif lies at 32 to 40; sequence YDPTIEDSY. 57–61 contributes to the GTP binding site; it reads DTAGQ.

The protein belongs to the small GTPase superfamily. Ras family. In its GTP-bound form interacts with PLCE1. Interacts with TBC1D10C. Interacts with RGL3. Interacts with HSPD1. Found in a complex with at least BRAF, HRAS, MAP2K1, MAPK3 and RGS14. Interacts (active GTP-bound form) with RGS14 (via RBD 1 domain). Forms a signaling complex with RASGRP1 and DGKZ. Interacts with RASSF5. Interacts with PDE6D. Interacts with IKZF3. Interacts with RACK1. Interacts with PIK3CG; the interaction is required for membrane recruitment and beta-gamma G protein dimer-dependent activation of the PI3K gamma complex PIK3CG:PIK3R6. Interacts with RAPGEF2. Interacts (active GTP-bound form) with both SHOC2 and PP1c (all isoforms) to form a tertiary complex; SHOC2 and PP1c preferably bind M-Ras/MRAS, but they also bind K-Ras/KRAS, N-Ras/NRAS and H-Ras/HRAS. Interacts (in GTP-bound form) with Oog1. Interacts (GTP-bound form) with MAPKAP1/SIN1; inhibiting H-Ras/HRAS activity. Ubiquitinated by the BCR(LZTR1) E3 ubiquitin ligase complex at Lys-170 in a non-degradative manner, leading to inhibit Ras signaling by decreasing Ras association with membranes.

It localises to the cell membrane. Its subcellular location is the golgi apparatus. It is found in the golgi apparatus membrane. It carries out the reaction GTP + H2O = GDP + phosphate + H(+). With respect to regulation, alternates between an inactive form bound to GDP and an active form bound to GTP. Activated by a guanine nucleotide-exchange factor (GEF) and inactivated by a GTPase-activating protein (GAP). In terms of biological role, ras proteins bind GDP/GTP and possess intrinsic GTPase activity. The protein is GTPase HRas (HRAS) of Mesocricetus auratus (Golden hamster).